The following is a 163-amino-acid chain: Putative C-type lectin protein FPV239 (163 aa).

Residues 48 to 159 enclose the C-type lectin domain; that stretch reads CKEGWVGYNK…CFLPKKWICR (112 aa). 2 disulfides stabilise this stretch: Cys76/Cys158 and Cys137/Cys150.

The protein is Putative C-type lectin protein FPV239 of Fowlpox virus (strain NVSL) (FPV).